A 168-amino-acid polypeptide reads, in one-letter code: Photosystem I assembly protein Ycf3 (168 aa).

TPR repeat units follow at residues 35-68, 72-105, and 120-153; these read AFAYYINGMSAQSEGNYAEALQNYYQAMHLEMDP, SYILYNIGIIHTSNGEHSKALEYYCRAIERNPFL, and GEQAIQQGDSEIAEAWFDQAAEYWKQARTLTPDN.

The protein belongs to the Ycf3 family.

It localises to the plastid membrane. In terms of biological role, essential for the assembly of the photosystem I (PSI) complex. May act as a chaperone-like factor to guide the assembly of the PSI subunits. This Cuscuta obtusiflora (Peruvian dodder) protein is Photosystem I assembly protein Ycf3.